The sequence spans 105 residues: Co-chaperonin GroES (105 aa).

Belongs to the GroES chaperonin family. As to quaternary structure, heptamer of 7 subunits arranged in a ring. Interacts with the chaperonin GroEL.

Its subcellular location is the cytoplasm. In terms of biological role, together with the chaperonin GroEL, plays an essential role in assisting protein folding. The GroEL-GroES system forms a nano-cage that allows encapsulation of the non-native substrate proteins and provides a physical environment optimized to promote and accelerate protein folding. GroES binds to the apical surface of the GroEL ring, thereby capping the opening of the GroEL channel. This chain is Co-chaperonin GroES, found in Parvibaculum lavamentivorans (strain DS-1 / DSM 13023 / NCIMB 13966).